The chain runs to 906 residues: MSPLTSSLLLFSLLTSSLEAIPVLQPSFPPSSPSPAPSPGVRILRAPESIVAPLGDEVVFECETSLQPEGFEWSYRRWPNAANSNGSVGASRFKYLKSGNGKLNVTQETAISRLRVLVRPDTVGEYRCIGWFGPLVVTSTTARLELANTSVKGRQETHLQWRVAPGNSVLWSCGQQVHSNPSASWSYYRNGVEIKPELAATNGNLFLTNVSTASAGKYTCLATNPASGARIEISSSMVLEVLSGRGSQNKAPHLLSGQPTSQAVTIREGSTLLLLCPGVGSPTPTAVWSSPDVVEAIHNKRTRVLNHGLEISNVQGHDTGTYICYLDNGVRPTLEHFINVTVEVPPRITRPPWADLTNEGERMQLECEATGVPAPELYWLLNGESSINDTEAEQLPNGYLVLHSVQKRHAGYVQCFARNRLGEQSAGTLLQVNPKQIQSEPRETGSGGGFGSHRSMKPVNHGQKPTKMIPPSPPNVTRLSDESVMLRWHVPRNDGLLILFFKVQYRMISEGKRKNWQTTNDNIPYGKPKWNSELGKSFTASVTDLKPQRTYRFRILAVYSNNDNKESNTSAKFYLQPGAALEPMPVPELLEIEEYSETAVVLHWRLDSDADEHLITGYYAYYRPSSSAGEYYKATIEGAHARSFQIATLEAATIYEFKLQSFSAVSASEFSALKQGRTQRPRASTTEEPTIQGIGDRDTTSHNQPSHNETVSMSPMLTGTIGGGALLLILLVSAFLCMCRRRSPRGRGQTQNKPRMAELREDFVPLGSCSPNKQRQRTRHIHITLNPLAQQQQQQLDEKNPPGLETDNDMAYFQRQPTYEYDPGLRRMSSSSLRRSQRTLERAGGANSGGNNGGNNNNLNQSSEAGTADGPCMQSSSKPGRVIMKRPRLSSRSENLSSGSLNSVGV.

Residues 1-20 form the signal peptide; the sequence is MSPLTSSLLLFSLLTSSLEA. Residues 21 to 715 are Extracellular-facing; it reads IPVLQPSFPP…SHNETVSMSP (695 aa). 4 Ig-like C2-type domains span residues 39-144, 134-236, 252-341, and 346-433; these read PGVR…TARL, PLVV…ISSS, PHLL…INVT, and PRIT…LQVN. Residues C62 and C128 are joined by a disulfide bond. N85, N104, N148, and N209 each carry an N-linked (GlcNAc...) asparagine glycan. Intrachain disulfides connect C173/C220 and C276/C324. N339 and N388 each carry an N-linked (GlcNAc...) asparagine glycan. The cysteines at positions 367 and 415 are disulfide-linked. Over residues 427-439 the composition is skewed to polar residues; the sequence is GTLLQVNPKQIQS. Residues 427 to 476 form a disordered region; that stretch reads GTLLQVNPKQIQSEPRETGSGGGFGSHRSMKPVNHGQKPTKMIPPSPPNV. Fibronectin type-III domains follow at residues 470–578 and 586–681; these read PPSP…LQPG and VPEL…TQRP. The N-linked (GlcNAc...) asparagine glycan is linked to N475. Residues R506, K512, K514, and R552 each contribute to the heparin site. N-linked (GlcNAc...) asparagine glycosylation occurs at N568. The disordered stretch occupies residues 673 to 713; the sequence is LKQGRTQRPRASTTEEPTIQGIGDRDTTSHNQPSHNETVSM. 2 stretches are compositionally biased toward polar residues: residues 676–689 and 701–713; these read GRTQRPRASTTEEP and SHNQPSHNETVSM. The helical transmembrane segment at 716-736 threads the bilayer; it reads MLTGTIGGGALLLILLVSAFL. The Cytoplasmic portion of the chain corresponds to 737–906; sequence CMCRRRSPRG…SSGSLNSVGV (170 aa). Residues 789–906 form a disordered region; that stretch reads AQQQQQQLDE…SSGSLNSVGV (118 aa). Composition is skewed to low complexity over residues 854 to 866 and 890 to 906; these read GNNNNLNQSSEAG and SSRSENLSSGSLNSVGV.

This sequence belongs to the immunoglobulin superfamily. IHOG family. In terms of assembly, homodimer. Heterotetramer; 2 iHog chains bind 2 hh chains when facilitated by heparin, heparin is required to promote high-affinity interactions between hh and iHog.

It localises to the membrane. In terms of biological role, mediates response to the active Hedgehog (Hh) protein signal in embryos, functioning upstream or at the level of patched (ptc). The chain is Interference hedgehog from Drosophila persimilis (Fruit fly).